Reading from the N-terminus, the 291-residue chain is ATP synthase gamma chain (291 aa).

The protein belongs to the ATPase gamma chain family. In terms of assembly, F-type ATPases have 2 components, CF(1) - the catalytic core - and CF(0) - the membrane proton channel. CF(1) has five subunits: alpha(3), beta(3), gamma(1), delta(1), epsilon(1). CF(0) has three main subunits: a, b and c.

The protein resides in the cell inner membrane. Produces ATP from ADP in the presence of a proton gradient across the membrane. The gamma chain is believed to be important in regulating ATPase activity and the flow of protons through the CF(0) complex. This Chlorobium limicola (strain DSM 245 / NBRC 103803 / 6330) protein is ATP synthase gamma chain.